The following is a 299-amino-acid chain: Oxygen-dependent coproporphyrinogen-III oxidase (299 aa).

Ser-92 serves as a coordination point for substrate. A divalent metal cation-binding residues include His-96 and His-106. The active-site Proton donor is the His-106. 108–110 is a substrate binding site; that stretch reads NVR. Positions 145 and 175 each coordinate a divalent metal cation. Residues 240-275 are important for dimerization; that stretch reads YVEFNLVWDRGTLFGLQTGGRTESILMSMPPLVRWE. Substrate is bound at residue 258–260; sequence GGR.

It belongs to the aerobic coproporphyrinogen-III oxidase family. Homodimer. A divalent metal cation is required as a cofactor.

It is found in the cytoplasm. The catalysed reaction is coproporphyrinogen III + O2 + 2 H(+) = protoporphyrinogen IX + 2 CO2 + 2 H2O. It participates in porphyrin-containing compound metabolism; protoporphyrin-IX biosynthesis; protoporphyrinogen-IX from coproporphyrinogen-III (O2 route): step 1/1. Its function is as follows. Involved in the heme biosynthesis. Catalyzes the aerobic oxidative decarboxylation of propionate groups of rings A and B of coproporphyrinogen-III to yield the vinyl groups in protoporphyrinogen-IX. This is Oxygen-dependent coproporphyrinogen-III oxidase from Citrobacter koseri (strain ATCC BAA-895 / CDC 4225-83 / SGSC4696).